The chain runs to 473 residues: Myocyte-specific enhancer factor 2C (473 aa).

Positions 3-57 (RKKIQITRIMDERNRQVTFTKRKFGLMKKAYELSVLCDCEIALIIFNSTNKLFQY) constitute an MADS-box domain. K4 carries the post-translational modification N6-acetyllysine. Positions 58-86 (ASTDMDKVLLKYTEYNEPHESRTNSDIVE) form a DNA-binding region, mef2-type. A Phosphoserine; by CK2 modification is found at S59. The interval 91–116 (KGLNGCDSPDPDADDSVGHSPESEDK) is disordered. Phosphoserine occurs at positions 98, 106, and 110. An N6-acetyllysine mark is found at K116 and K119. Residues 180-224 (NSMSPGVTHRPPSAGNTGGLMGGDLTSGAGTSAGNGYGNPRNSPG) form a disordered region. 2 positions are modified to phosphoserine: S222 and S228. 2 positions are modified to N6-acetyllysine: K234 and K239. A Phosphoserine modification is found at S240. An N6-acetyllysine mark is found at K252 and K264. Residues 271 to 278 (SEDVDLLL) form a beta domain region. A phosphothreonine; by MAPK14 mark is found at T293 and T300. Positions 368-399 (ACTSTHLSQSSNLSLPSTQSLNIKSEPVSPPR) are transcription repressor. A compositionally biased stretch (polar residues) spans 375 to 390 (SQSSNLSLPSTQSLNI). The disordered stretch occupies residues 375–473 (SQSSNLSLPS…RMRLSEGWAT (99 aa)). A Glycyl lysine isopeptide (Lys-Gly) (interchain with G-Cter in SUMO) cross-link involves residue K391. At S396 the chain carries Phosphoserine; by CDK5. S419 carries the post-translational modification Phosphoserine; by MAPK7. Over residues 419-432 (SPVDSLSSCSSSYD) the composition is skewed to low complexity. The segment covering 433-443 (GSDREDHRNEF) has biased composition (basic and acidic residues). The residue at position 445 (S445) is a Phosphoserine.

This sequence belongs to the MEF2 family. Forms a complex with class II HDACs in undifferentiating cells. On myogenic differentiation, HDACs are released into the cytoplasm allowing MEF2s to interact with other proteins for activation. Interacts with EP300 in differentiating cells; the interaction acetylates MEF2C leading to increased DNA binding and activation. Interacts with HDAC7 and CARM1. Interacts with HDAC4 and HDAC9; the interaction with HDACs represses transcriptional activity. Interacts with LPIN1. Interacts with MYOCD. Interacts with AKAP13. Interacts with FOXK1; the interaction inhibits MEF2C transactivation activity. Interacts (via N-terminus) with HABP4; this interaction decreases DNA-binding activity of MEF2C in myocardial cells in response to mechanical stress. Interacts with JPH2; interaction specifically takes place with the Junctophilin-2 N-terminal fragment cleavage product of JPH2. Interacts (via MADS box) with SOX18. Interacts with PHF7; the interaction promotes MEF2C binding to its transcription targets. Phosphorylation on Ser-59 enhances DNA binding activity. Phosphorylation on Ser-396 is required for Lys-391 sumoylation and inhibits transcriptional activity. Post-translationally, acetylated by p300 on several sites in diffentiating myocytes. Acetylation on Lys-4 increases DNA binding and transactivation. In terms of processing, sumoylated on Lys-391 with SUMO2 but not by SUMO1 represses transcriptional activity. Proteolytically cleaved in cerebellar granule neurons, probably by caspase 7, following neurotoxicity. Preferentially cleaves the CDK5-mediated hyperphosphorylated form which leads to neuron apoptosis and transcriptional inactivation. Expressed in brain and skeletal muscle.

Its subcellular location is the nucleus. The protein resides in the cytoplasm. It localises to the sarcoplasm. Its function is as follows. Transcription activator which binds specifically to the MEF2 element present in the regulatory regions of many muscle-specific genes. Controls cardiac morphogenesis and myogenesis, and is also involved in vascular development. Enhances transcriptional activation mediated by SOX18. Plays an essential role in hippocampal-dependent learning and memory by suppressing the number of excitatory synapses and thus regulating basal and evoked synaptic transmission. Crucial for normal neuronal development, distribution, and electrical activity in the neocortex. Necessary for proper development of megakaryocytes and platelets and for bone marrow B-lymphopoiesis. Required for B-cell survival and proliferation in response to BCR stimulation, efficient IgG1 antibody responses to T-cell-dependent antigens and for normal induction of germinal center B-cells. May also be involved in neurogenesis and in the development of cortical architecture. Isoforms that lack the repressor domain are more active than isoform 1. This chain is Myocyte-specific enhancer factor 2C, found in Homo sapiens (Human).